A 287-amino-acid chain; its full sequence is Putative sugar uptake protein spyM18_2243 (287 aa).

Transmembrane regions (helical) follow at residues 4–26 (IFYA…KIGG), 33–50 (LGMT…WLIV), 55–72 (TLQL…WSIG), 85–107 (VSVA…GVLV), 117–134 (FVVG…FYFS), 154–171 (FRAL…AVLF), 181–200 (SVIL…FMSF), 207–229 (YVIK…LLAA), 234–256 (LAIA…ILFL), and 268–285 (VVTG…LGVV).

The protein belongs to the GRP transporter (TC 2.A.7.5) family.

Its subcellular location is the cell membrane. In Streptococcus pyogenes serotype M18 (strain MGAS8232), this protein is Putative sugar uptake protein spyM18_2243.